We begin with the raw amino-acid sequence, 308 residues long: Phosphoribosylaminoimidazole-succinocarboxamide synthase (308 aa).

It belongs to the SAICAR synthetase family.

It carries out the reaction 5-amino-1-(5-phospho-D-ribosyl)imidazole-4-carboxylate + L-aspartate + ATP = (2S)-2-[5-amino-1-(5-phospho-beta-D-ribosyl)imidazole-4-carboxamido]succinate + ADP + phosphate + 2 H(+). It functions in the pathway purine metabolism; IMP biosynthesis via de novo pathway; 5-amino-1-(5-phospho-D-ribosyl)imidazole-4-carboxamide from 5-amino-1-(5-phospho-D-ribosyl)imidazole-4-carboxylate: step 1/2. The sequence is that of Phosphoribosylaminoimidazole-succinocarboxamide synthase from Xanthomonas oryzae pv. oryzae (strain PXO99A).